The sequence spans 5255 residues: SCO-spondin (5255 aa).

The N-terminal stretch at 1-18 (MGIVATVLLWVVTEAARG) is a signal peptide. The EMI domain occupies 19-111 (RWCERTEQVT…ACCAGWSGPH (93 aa)). N-linked (GlcNAc...) asparagine glycosylation is found at Asn-97, Asn-136, Asn-156, and Asn-255. Residues 192-358 (ASCTVWAGSR…PDANPELSCS (167 aa)) enclose the VWFD 1 domain. 2 disulfide bridges follow: Cys-194/Cys-317 and Cys-216/Cys-357. One can recognise a TIL 1 domain in the interval 453–508 (CGHGQRYSDCVSSCPASCMAAGTAEEGHCRDDCASGCECTPGLLLDRGACIPQSAC). Residues 508-601 (CPCLHRGHIY…CGGHQPLSCL (94 aa)) enclose the VWFC 1 domain. The VWFD 2 domain occupies 546 to 717 (AECAVLGDLH…NKYRVSTDCP (172 aa)). 3 disulfide bridges follow: Cys-548–Cys-681, Cys-570–Cys-716, and Cys-592–Cys-600. An N-linked (GlcNAc...) asparagine glycan is attached at Asn-801. The TIL 2 domain maps to 809–868 (CRGGQVYQECSSPCGRTCADLRLDGASSCPSLDNICVSGCNCPEGPVLDDGGQCVPPGVC). Positions 868–926 (CPCQHSSQLYPAGSKIRQGCNACMCTAGTWSCTDAPCPDAAFCPGDLVYVFGSCLRTCD) constitute a VWFC 2 domain. Residues Asn-931 and Asn-972 are each glycosylated (N-linked (GlcNAc...) asparagine). The VWFD 3 domain maps to 998–1168 (GTCVATGDPH…NSWRVSLLCP (171 aa)). Disulfide bonds link Cys-1000–Cys-1132, Cys-1022–Cys-1167, and Cys-1043–Cys-1050. One can recognise a TIL 3 domain in the interval 1263–1319 (CDGGQEYSACGPPCPQTCRNLGLELPEHCDTMSCLEGCFCPEGKVLHEGSCIDPAEC). Asn-1340 carries N-linked (GlcNAc...) asparagine glycosylation. 6 LDL-receptor class A domains span residues 1362–1398 (HCPDSEFPCRSGGRCVPGAWLCDNEDDCGDGSDEVCA), 1400–1436 (HCAPHQHRCADGQCVPWGARCDGLSDCGDGSDERGCP), 1439–1477 (PCAPPEFRCASGRCIPRAHVCNGELDCGFADDSDEAGCS), 1479–1515 (SCSVGEFQCAAGRCVPYPHRCNGHDDCGDFSDERGCV), 1515–1551 (VCPAGHFQCPDAQCLPPAALCDGMQDCGDGTDEAFCP), and 1555–1593 (TCAPGQLPCPDGSCVSQVKLCDGIWDCRDGWDESSVRCM). Disulfide bonds link Cys-1363-Cys-1376, Cys-1370-Cys-1389, Cys-1383-Cys-1397, Cys-1401-Cys-1413, Cys-1408-Cys-1426, Cys-1420-Cys-1435, Cys-1440-Cys-1452, Cys-1447-Cys-1465, Cys-1459-Cys-1476, Cys-1480-Cys-1492, Cys-1487-Cys-1505, Cys-1499-Cys-1514, Cys-1516-Cys-1528, Cys-1523-Cys-1541, Cys-1535-Cys-1550, Cys-1556-Cys-1568, Cys-1563-Cys-1581, and Cys-1575-Cys-1592. Asn-1610 carries an N-linked (GlcNAc...) asparagine glycan. LDL-receptor class A domains are found at residues 1616–1652 (VCGPYEFPCRSGQCVPRGWVCDSEADCPDNSDELGCN), 1654–1693 (SCVLGHFPCALGAHCIHYDHLCDGIPHCPDHSDESDDNCG), and 1699–1734 (PCPGHFVCNNRVCVNATRVCDGALDCPQGEDELACE). 3 cysteine pairs are disulfide-bonded: Cys-1617-Cys-1629, Cys-1624-Cys-1642, and Cys-1636-Cys-1651. A glycan (N-linked (GlcNAc...) asparagine) is linked at Asn-1652. 6 disulfides stabilise this stretch: Cys-1655-Cys-1668, Cys-1662-Cys-1681, Cys-1675-Cys-1692, Cys-1700-Cys-1711, Cys-1706-Cys-1724, and Cys-1718-Cys-1733. N-linked (GlcNAc...) asparagine glycosylation is present at Asn-1713. Residue Asn-1743 is glycosylated (N-linked (GlcNAc...) asparagine). One can recognise an LDL-receptor class A 10 domain in the interval 1748–1790 (PCAEYSCRDGDCITFKQVCNGLPDCRDGDMASGWLPSDEWDCG). Intrachain disulfides connect Cys-1749–Cys-1759, Cys-1754–Cys-1772, Cys-1766–Cys-1789, Cys-1801–Cys-1837, Cys-1805–Cys-1842, and Cys-1816–Cys-1827. TSP type-1 domains lie at 1789–1843 (CGQW…TACP) and 1845–1903 (DGAW…DGCP). The N-linked (GlcNAc...) asparagine glycan is linked to Asn-1856. 3 disulfides stabilise this stretch: Cys-1857–Cys-1897, Cys-1861–Cys-1902, and Cys-1871–Cys-1881. A TIL 4 domain is found at 1907–1961 (CPGGLQPRPCAPCPASCADLASRAPCRREQCTPGCWCAEGLVLDGERGCVRPREC). 2 consecutive EGF-like domains span residues 1919 to 1956 (CPASCADLASRAPCRREQCTPGCWCAEGLVLDGERGCV) and 1957 to 1983 (RPRECRCEVDGLRYWPGQRMKLNCRLC). The VWFC 3 domain occupies 1961-2019 (CRCEVDGLRYWPGQRMKLNCRLCTCLDGQPRRCRHNPACSVSCSWSAWSPWGECLGPCG). Residues 2002-2058 (SCSWSAWSPWGECLGPCGVQSIQWSFRSPSHPGKHGTNRQCRGIYRKARRCQTEPCQ) form the TSP type-1 3 domain. Cystine bridges form between Cys-2003/Cys-2042, Cys-2014/Cys-2018, and Cys-2052/Cys-2057. Residues 2058 to 2120 (QECEHQGRSR…GKGDSCCFCA (63 aa)) form the VWFC 4 domain. N-linked (GlcNAc...) asparagine glycans are attached at residues Asn-2125 and Asn-2230. Intrachain disulfides connect Cys-2162-Cys-2310, Cys-2328-Cys-2339, Cys-2335-Cys-2352, and Cys-2346-Cys-2361. The region spanning 2162–2310 (CYSPLGIASL…IFLRAELLGC (149 aa)) is the F5/8 type C domain. Residues 2327 to 2362 (PCGTGEFWCGVSCVTASRRCDGATDCPGGADEAGCE) form the LDL-receptor class A 11 domain. Residues 2352 to 2373 (CPGGADEAGCEPPSSTTLPTHP) form a disordered region. The span at 2364–2373 (PSSTTLPTHP) shows a compositional bias: polar residues. LDL-receptor class A domains follow at residues 2481 to 2517 (LCPPDQFLCDALGCVDAAMVCDGQQDCLDGSDEAHCG) and 2538 to 2574 (TCSPKQFSCGTGECLALEKRCDLSRDCADGSDESSCA). 12 disulfide bridges follow: Cys-2482–Cys-2494, Cys-2489–Cys-2507, Cys-2501–Cys-2516, Cys-2539–Cys-2551, Cys-2546–Cys-2564, Cys-2558–Cys-2573, Cys-2576–Cys-2612, Cys-2587–Cys-2591, Cys-2622–Cys-2627, Cys-2642–Cys-2679, Cys-2646–Cys-2684, and Cys-2657–Cys-2669. 2 TSP type-1 domains span residues 2575–2628 (DCIL…RACP) and 2630–2685 (PGAW…QPCG). Residues 2708–2750 (PPCPQVCGDLSATSSCQSPCQEGCRCPPGLFLQEGTCVNASQC) enclose the TIL 5 domain. N-linked (GlcNAc...) asparagine glycosylation is present at Asn-2746. 3 consecutive TSP type-1 domains span residues 2790–2844 (ACAW…TPCA), 2849–2903 (SSGW…APCP), and 2905–2958 (AGVW…RPCG). Intrachain disulfides connect Cys-2791–Cys-2829, Cys-2802–Cys-2806, Cys-2839–Cys-2843, Cys-2861–Cys-2897, Cys-2865–Cys-2902, Cys-2881–Cys-2887, Cys-2917–Cys-2952, Cys-2921–Cys-2957, and Cys-2932–Cys-2942. One can recognise a TIL 6 domain in the interval 2971–3020 (EECRHSEGRCPWICQDLGAGVACTAQCQPGCHCPAGLLLQNGTCVPPSHC). Residues Asn-3011, Asn-3042, and Asn-3065 are each glycosylated (N-linked (GlcNAc...) asparagine). Residues 3020 to 3077 (CLCHHRGHLYQPGDINALDTCNNCTCVTGQMVCSTETCPVPCTWSNWTAWSTCSHSCD) enclose the VWFC 5 domain. TSP type-1 domains lie at 3060–3115 (PCTW…QPCR) and 3117–3158 (VAPW…APCP). Cystine bridges form between Cys-3061/Cys-3099, Cys-3072/Cys-3076, and Cys-3109/Cys-3114. Asn-3136 carries N-linked (GlcNAc...) asparagine glycosylation. Residues 3165–3217 (CPPGKQWQACAQGAASCAELSAAPPADGSCHPGCYCPPGALLLNNECVAEAAC) form the TIL 7 domain. In terms of domain architecture, VWFC 6 spans 3217–3275 (CPCAVDGVLYQPGDVVPQGCHNCSCIAGRVTNCSQEDCGDVDGPWTPWTPWSECSASCG). Asn-3238 and Asn-3248 each carry an N-linked (GlcNAc...) asparagine glycan. The TSP type-1 11 domain occupies 3258–3309 (DGPWTPWTPWSECSASCGPGRQRRYRFCSAHPGVPCAEPQPQERPCARQPCH). Cystine bridges form between Cys-3270-Cys-3303, Cys-3274-Cys-3308, and Cys-3285-Cys-3293. 3 N-linked (GlcNAc...) asparagine glycosylation sites follow: Asn-3350, Asn-3366, and Asn-3392. TSP type-1 domains are found at residues 3410 to 3475 (PGAW…PPCP) and 3477 to 3532 (DGAW…SSCP). Disulfide bonds link Cys-3422–Cys-3468, Cys-3426–Cys-3474, Cys-3437–Cys-3449, Cys-3489–Cys-3524, Cys-3492–Cys-3531, and Cys-3502–Cys-3514. The region spanning 3534–3589 (CAGGLVAFTCGKPCPHSCEDLREDTACMATPRCLPACACPHGQLLQDGDCVPPELC) is the TIL 8 domain. 2 N-linked (GlcNAc...) asparagine glycosylation sites follow: Asn-3598 and Asn-3625. TSP type-1 domains lie at 3644–3700 (DGGW…EGCP) and 3702–3751 (EEPW…HVCR). Cystine bridges form between Cys-3656–Cys-3693, Cys-3660–Cys-3699, Cys-3671–Cys-3683, Cys-3714–Cys-3745, Cys-3718–Cys-3750, and Cys-3729–Cys-3735. Asn-3823 and Asn-3869 each carry an N-linked (GlcNAc...) asparagine glycan. TSP type-1 domains lie at 3878–3934 (DGGF…PECP), 3951–4004 (EEGF…PLCS), 4018–4074 (NCSW…QACK), and 4076–4131 (DGAW…QPCD). 6 disulfides stabilise this stretch: Cys-3890/Cys-3928, Cys-3894/Cys-3933, Cys-3906/Cys-3918, Cys-3963/Cys-3998, Cys-3967/Cys-4003, and Cys-3982/Cys-3988. The tract at residues 3932–3951 (ECPAVPTTEPGPGVAGAEEE) is disordered. Asn-4018 is a glycosylation site (N-linked (GlcNAc...) asparagine). Cystine bridges form between Cys-4019–Cys-4055, Cys-4030–Cys-4034, Cys-4068–Cys-4073, Cys-4088–Cys-4125, Cys-4092–Cys-4130, and Cys-4103–Cys-4115. The 56-residue stretch at 4134–4189 (CPPGMALVTCANHCPRHCGDLQEGIVCREEEHCEPGCRCPNGTLEQDGGCVPLAHC) folds into the TIL 9 domain. 2 N-linked (GlcNAc...) asparagine glycosylation sites follow: Asn-4174 and Asn-4211. 3 TSP type-1 domains span residues 4230–4282 (RCPW…GPCP), 4322–4384 (GAEH…RPCP), and 4386–4433 (ECSW…SGCS). Cystine bridges form between Cys-4231-Cys-4266, Cys-4242-Cys-4246, and Cys-4276-Cys-4281. Asn-4362 is a glycosylation site (N-linked (GlcNAc...) asparagine). Cystine bridges form between Cys-4387–Cys-4417, Cys-4398–Cys-4400, and Cys-4427–Cys-4432. Residue Asn-4428 is glycosylated (N-linked (GlcNAc...) asparagine). The TIL 10 domain occupies 4437-4492 (CEPPFEFQPCSPPCARLCSTLQHPELCPAQSHCLPGCFCPQGLLEQRSACVPPEQC). Asn-4498 carries N-linked (GlcNAc...) asparagine glycosylation. TSP type-1 domains lie at 4537-4608 (LPLS…DICQ) and 4610-4662 (LCLW…AVCP). 6 disulfide bridges follow: Cys-4548–Cys-4601, Cys-4551–Cys-4607, Cys-4575–Cys-4591, Cys-4611–Cys-4646, Cys-4622–Cys-4626, and Cys-4656–Cys-4661. In terms of domain architecture, TIL 11 spans 4675-4722 (TTCANSCPRACADLWQHVECVQGGCKPGCRCPQGQLLQDGLCVPTAQC). 3 N-linked (GlcNAc...) asparagine glycosylation sites follow: Asn-4730, Asn-4747, and Asn-4752. 2 TSP type-1 domains span residues 4762 to 4815 (CPSY…QPCP) and 4817 to 4869 (GCQL…HNCT). Intrachain disulfides connect Cys-4774-Cys-4809, Cys-4778-Cys-4814, Cys-4789-Cys-4798, Cys-4818-Cys-4852, Cys-4829-Cys-4833, and Cys-4863-Cys-4868. N-linked (GlcNAc...) asparagine glycosylation occurs at Asn-4867. Residues 4872–4926 (CPRSQVHRECANACPHACADLRPQTQCLPQPCQPGCACPPGQVLQDGACVPPEEC) form the TIL 12 domain. Asn-4939 and Asn-4970 each carry an N-linked (GlcNAc...) asparagine glycan. Positions 4979–5033 (DCLWSPWSPWSPCSVTCGMGERLSHRHPLRQRLYEGAECLGPPVRRAACHLPDCA) constitute a TSP type-1 27 domain. Disulfide bonds link Cys-4980-Cys-5017, Cys-4991-Cys-4995, and Cys-5027-Cys-5032. Asn-5081, Asn-5122, and Asn-5169 each carry an N-linked (GlcNAc...) asparagine glycan. A VWFC 7 domain is found at 5092–5150 (CECLHQGQLHQPGSEWQEQCARCRCVDGKANCTDGCTPLSCPEGEVKVREPGRCCPVCR). 4 cysteine pairs are disulfide-bonded: Cys-5161–Cys-5209, Cys-5175–Cys-5226, Cys-5185–Cys-5242, and Cys-5189–Cys-5244. One can recognise a CTCK domain in the interval 5161 to 5248 (CRRFTELRNI…IHSCECSSCQ (88 aa)).

It belongs to the thrombospondin family.

Its subcellular location is the secreted. The protein localises to the extracellular space. Its function is as follows. Involved in the modulation of neuronal aggregation. May be involved in developmental events during the formation of the central nervous system. The protein is SCO-spondin (SSPO) of Gallus gallus (Chicken).